Here is a 646-residue protein sequence, read N- to C-terminus: Threonine--tRNA ligase (646 aa).

One can recognise a TGS domain in the interval 1–61; the sequence is MIKITFPDGS…NEDANFVLYK (61 aa). The catalytic stretch occupies residues 242 to 541; the sequence is DHRKIGKEMD…LIEHTAGKFP (300 aa). Residues Cys337, His388, and His518 each coordinate Zn(2+).

This sequence belongs to the class-II aminoacyl-tRNA synthetase family. Homodimer. The cofactor is Zn(2+).

Its subcellular location is the cytoplasm. It carries out the reaction tRNA(Thr) + L-threonine + ATP = L-threonyl-tRNA(Thr) + AMP + diphosphate + H(+). Functionally, catalyzes the attachment of threonine to tRNA(Thr) in a two-step reaction: L-threonine is first activated by ATP to form Thr-AMP and then transferred to the acceptor end of tRNA(Thr). Also edits incorrectly charged L-seryl-tRNA(Thr). This is Threonine--tRNA ligase from Phocaeicola vulgatus (strain ATCC 8482 / DSM 1447 / JCM 5826 / CCUG 4940 / NBRC 14291 / NCTC 11154) (Bacteroides vulgatus).